The chain runs to 408 residues: Innexin-12 (408 aa).

A helical transmembrane segment spans residues 29-49 (TIGLVLASAFITGWSFVGSPI). Residue asparagine 99 is glycosylated (N-linked (GlcNAc...) asparagine). Transmembrane regions (helical) follow at residues 113-133 (QWVP…VVIW), 197-217 (VITS…FQFV), and 284-304 (IFVA…TNTI).

This sequence belongs to the pannexin family.

The protein resides in the cell membrane. The protein localises to the cell junction. It is found in the gap junction. In terms of biological role, structural component of the gap junctions. Plays a role in oocyte directional transit in the spermatheca during ovulation by facilitating the directional propagation of the calcium signal in the spermatheca. Plays a role in male tail tip morphogenesis. This is Innexin-12 from Caenorhabditis elegans.